The following is a 674-amino-acid chain: ATP-citrate synthase subunit 1 (674 aa).

Low complexity predominate over residues 1–10; the sequence is MPSATSTNGA. The interval 1–26 is disordered; that stretch reads MPSATSTNGANGNGNGNGASASPAPG. ATP-binding positions include 261–281 and 312–338; these read LLRY…EVGG and FKTE…KNKS. Glu-278 is a Mg(2+) binding site. His-320 functions as the Tele-phosphohistidine intermediate in the catalytic mechanism. 339-349 lines the CoA pocket; it reads MREAGFYVPDT.

This sequence belongs to the succinate/malate CoA ligase alpha subunit family. Composed of two subunits.

The protein resides in the cytoplasm. The enzyme catalyses oxaloacetate + acetyl-CoA + ADP + phosphate = citrate + ATP + CoA. Its function is as follows. Catalyzes the formation of cytosolic acetyl-CoA, which is mainly used for the biosynthesis of fatty acids and sterols. In Sordaria macrospora (strain ATCC MYA-333 / DSM 997 / K(L3346) / K-hell), this protein is ATP-citrate synthase subunit 1 (ACL1).